The following is a 102-amino-acid chain: NADH-quinone oxidoreductase subunit K (102 aa).

The next 3 membrane-spanning stretches (helical) occupy residues 6-26, 30-50, and 65-85; these read MEHG…GLLI, LLFI…AFVV, and ILVI…LLLL.

Belongs to the complex I subunit 4L family. In terms of assembly, NDH-1 is composed of 14 different subunits. Subunits NuoA, H, J, K, L, M, N constitute the membrane sector of the complex.

It is found in the cell inner membrane. It catalyses the reaction a quinone + NADH + 5 H(+)(in) = a quinol + NAD(+) + 4 H(+)(out). In terms of biological role, NDH-1 shuttles electrons from NADH, via FMN and iron-sulfur (Fe-S) centers, to quinones in the respiratory chain. The immediate electron acceptor for the enzyme in this species is believed to be ubiquinone. Couples the redox reaction to proton translocation (for every two electrons transferred, four hydrogen ions are translocated across the cytoplasmic membrane), and thus conserves the redox energy in a proton gradient. The sequence is that of NADH-quinone oxidoreductase subunit K from Aeromonas hydrophila subsp. hydrophila (strain ATCC 7966 / DSM 30187 / BCRC 13018 / CCUG 14551 / JCM 1027 / KCTC 2358 / NCIMB 9240 / NCTC 8049).